The sequence spans 144 residues: UPF0102 protein BURPS1106A_3900 (144 aa).

The interval 1-28 is disordered; sequence MCHAREASPGTGEPEAAPRDNFPRAAGS.

The protein belongs to the UPF0102 family.

The protein is UPF0102 protein BURPS1106A_3900 of Burkholderia pseudomallei (strain 1106a).